The following is a 129-amino-acid chain: Large ribosomal subunit protein bL12c (129 aa).

A compositionally biased stretch (basic and acidic residues) spans 101–123; it reads KPIKEGMSKADAEAGKKQLEEAG. The interval 101–129 is disordered; sequence KPIKEGMSKADAEAGKKQLEEAGAKATLK.

Belongs to the bacterial ribosomal protein bL12 family. In terms of assembly, homodimer. Part of the ribosomal stalk of the 50S ribosomal subunit. Forms a multimeric L10(L12)X complex, where L10 forms an elongated spine to which 2 to 4 L12 dimers bind in a sequential fashion. Binds GTP-bound translation factors.

It localises to the plastid. Its subcellular location is the chloroplast. Its function is as follows. Forms part of the ribosomal stalk which helps the ribosome interact with GTP-bound translation factors. Is thus essential for accurate translation. The chain is Large ribosomal subunit protein bL12c from Guillardia theta (Cryptophyte).